The chain runs to 123 residues: NADH-quinone oxidoreductase subunit A (123 aa).

3 consecutive transmembrane segments (helical) span residues 11–31 (FPVL…VSIG), 67–87 (LVAI…PWGV), and 92–112 (IGWP…LGFA).

The protein belongs to the complex I subunit 3 family. In terms of assembly, NDH-1 is composed of 14 different subunits. Subunits NuoA, H, J, K, L, M, N constitute the membrane sector of the complex.

It localises to the cell inner membrane. The enzyme catalyses a quinone + NADH + 5 H(+)(in) = a quinol + NAD(+) + 4 H(+)(out). In terms of biological role, NDH-1 shuttles electrons from NADH, via FMN and iron-sulfur (Fe-S) centers, to quinones in the respiratory chain. The immediate electron acceptor for the enzyme in this species is believed to be ubiquinone. Couples the redox reaction to proton translocation (for every two electrons transferred, four hydrogen ions are translocated across the cytoplasmic membrane), and thus conserves the redox energy in a proton gradient. This chain is NADH-quinone oxidoreductase subunit A, found in Paraburkholderia phymatum (strain DSM 17167 / CIP 108236 / LMG 21445 / STM815) (Burkholderia phymatum).